Consider the following 807-residue polypeptide: Dual specificity protein kinase YAK1 (807 aa).

A compositionally biased stretch (low complexity) spans 1–19 (MNSSNNNDSSSSNSNMNNS). The interval 1-84 (MNSSNNNDSS…QQQQQQQQNS (84 aa)) is disordered. Polar residues predominate over residues 20-31 (LSPTLVTHSDAS). At Ser38 the chain carries Phosphoserine. Residues 55–84 (NQGSQRSPQQQHQNHHQQQQQQQQQQQQNS) show a composition bias toward low complexity. Residues Ser115, Ser118, and Ser127 each carry the phosphoserine modification. Residues 124–180 (RRKSSLVVPPARAPAPNPFQYDSYPAYTSSNTSLAGNSSGQYPSGYQQQQQQVYQQG) are disordered. The span at 149-160 (AYTSSNTSLAGN) shows a compositional bias: polar residues. A compositionally biased stretch (low complexity) spans 161 to 180 (SSGQYPSGYQQQQQQVYQQG). Ser206 bears the Phosphoserine mark. A compositionally biased stretch (low complexity) spans 214-224 (SNFSSLNSNTN). Residues 214–254 (SNFSSLNSNTNQGTNSIPVMSPYRRLSAYPPSTSPPLQPPF) are disordered. Phosphoserine is present on residues Ser240, Ser245, and Ser247. Thr288 is modified (phosphothreonine). Ser295 bears the Phosphoserine mark. In terms of domain architecture, Protein kinase spans 369–704 (YLVLDILGQG…PQQAMLHPFI (336 aa)). Residues 375-383 (LGQGTFGQV) and Lys398 each bind ATP. Catalysis depends on Asp496, which acts as the Proton acceptor. Tyr530 is subject to Phosphotyrosine. The segment at 714–758 (FPPGSSLPGPSEKHDDAKGQQSEYGSANDSSNNAGHNYVYNPSSA) is disordered. Residues 732-758 (GQQSEYGSANDSSNNAGHNYVYNPSSA) show a composition bias toward polar residues.

Belongs to the protein kinase superfamily. CMGC Ser/Thr protein kinase family. MNB/DYRK subfamily. Post-translationally, phosphorylated; highly.

The protein localises to the cytoplasm. The protein resides in the nucleus. It catalyses the reaction L-seryl-[protein] + ATP = O-phospho-L-seryl-[protein] + ADP + H(+). The enzyme catalyses L-threonyl-[protein] + ATP = O-phospho-L-threonyl-[protein] + ADP + H(+). The catalysed reaction is L-tyrosyl-[protein] + ATP = O-phospho-L-tyrosyl-[protein] + ADP + H(+). In terms of biological role, negative regulator of the cell cycle acting downstream of the cAMP-dependent protein kinase. Part of a glucose-sensing system involved in growth control in response to glucose availability. Phosphorylates POP2. The sequence is that of Dual specificity protein kinase YAK1 (YAK1) from Saccharomyces cerevisiae (strain ATCC 204508 / S288c) (Baker's yeast).